Here is a 307-residue protein sequence, read N- to C-terminus: Auxin-induced protein PCNT115 (307 aa).

Tyr64 (proton donor) is an active-site residue. Substrate is bound at residue His136. 215–225 (SPLGRGFLSSG) is an NADP(+) binding site.

Belongs to the aldo/keto reductase family. Aldo/keto reductase 2 subfamily.

This is Auxin-induced protein PCNT115 from Nicotiana tabacum (Common tobacco).